The chain runs to 594 residues: MNKIKGGRHKSPVKLFEVRLYNAEANVIVLYGNSMDTSARLSGIVVLSVSSPIRVKNIKLRLSGRSFVCWADESRHASPGNRIRRQVVQILDKSWSFLAPNESAKVIDQGNYEYPFYYELPPDIPDSIEGIPGCHIIYTLTASLERATQPPTNLETALQFRVIRTIPPNSLDLMHSVSVSDIWPLKVNYETSIPSKVYAIGSEIPVNITLYPLLKGLDVGKVTLVLKEYCTLFITSKAYSSTCRKEFKRALVKKTIPGLPMVDDYWQDQIMVKIPDSLGECTQDCDLNCIRVHHKLRLSISLLNPDGHVSELRNSLPLSLVISPVMFGARPTEGVFTGDHNSYVNENILPSYDKHVFDVLWDGIPSENPQLQSGFTTPNLSRRNSSDFGPNSPVNIHSNPVPISGQQPSSPASNSNANFFFGSSPQSMSSEQTDMMSPITSPLAPFSGVTRRAARTRANSASSVFNSQLQPLQTDLLSPLPSPTSSNSRLPRVRSACTLNVQELSKIPPYYEAHSAFTNVLPLDGLPRYEEATRPSSPTESVEIPSNTTTIAPSPVPTIIAPALPSTPAPPLPSHPMATRKSLSSTNLVRRGVR.

A compositionally biased stretch (polar residues) spans 368–398; that stretch reads NPQLQSGFTTPNLSRRNSSDFGPNSPVNIHS. 2 disordered regions span residues 368–417 and 531–594; these read NPQL…NSNA and EATR…RGVR. Positions 404 to 417 are enriched in low complexity; that stretch reads SGQQPSSPASNSNA. Residues 534 to 552 show a composition bias toward polar residues; it reads RPSSPTESVEIPSNTTTIA. Pro residues predominate over residues 565 to 574; sequence PSTPAPPLPS. Serine 584 is subject to Phosphoserine.

It belongs to the arrestin family.

This Schizosaccharomyces pombe (strain 972 / ATCC 24843) (Fission yeast) protein is Arrestin domain-containing protein C584.15c.